The sequence spans 64 residues: Large ribosomal subunit protein bL35c (64 aa).

Belongs to the bacterial ribosomal protein bL35 family.

The protein resides in the plastid. It is found in the chloroplast. The sequence is that of Large ribosomal subunit protein bL35c from Phaeodactylum tricornutum (strain CCAP 1055/1).